The sequence spans 405 residues: MKTYIVGGAVRDRLLGLPVRDRDWVVTGETPESMRRRGFRPVGRDFPVFLHPDTHEEYALARTERKTARGYHGFSFHAAPDVTLEADLARRDLTINAMAEDENGELVDPFNGRQDLAAGILRHVGEAFVEDPVRILRIARFAARFGFSIAEDTQNLMRFMVDDGEVDHLVPERVWQELSKGLMEAQPSRFFTVLRDCGALARILPEVDALWGVPQRADYHPEVDTGVHAMLVLDQSARDGLGLAARFAALCHDLGKALTPAELLPRHSGHEGRGEAPTRALCERLRVPAECRDLALLTVSFHSHIHRIRELRPDTVLRLLRECDALRRPARFDDLLAVCRCDAHGRPGHEQDAYPQIAIARRYLDAAQSVNAGDIARQTPDKSTIPYRIDAARLCAIEAAKRQIS.

Residues G8 and R11 each contribute to the ATP site. CTP contacts are provided by G8 and R11. Residues D21 and D23 each coordinate Mg(2+). ATP-binding residues include R91, R137, and R140. Residues R91, R137, and R140 each contribute to the CTP site. Residues 225–326 form the HD domain; that stretch reads TGVHAMLVLD…LRLLRECDAL (102 aa).

This sequence belongs to the tRNA nucleotidyltransferase/poly(A) polymerase family. Bacterial CCA-adding enzyme type 1 subfamily. Monomer. Can also form homodimers and oligomers. It depends on Mg(2+) as a cofactor. Ni(2+) is required as a cofactor.

The enzyme catalyses a tRNA precursor + 2 CTP + ATP = a tRNA with a 3' CCA end + 3 diphosphate. It catalyses the reaction a tRNA with a 3' CCA end + 2 CTP + ATP = a tRNA with a 3' CCACCA end + 3 diphosphate. Catalyzes the addition and repair of the essential 3'-terminal CCA sequence in tRNAs without using a nucleic acid template. Adds these three nucleotides in the order of C, C, and A to the tRNA nucleotide-73, using CTP and ATP as substrates and producing inorganic pyrophosphate. tRNA 3'-terminal CCA addition is required both for tRNA processing and repair. Also involved in tRNA surveillance by mediating tandem CCA addition to generate a CCACCA at the 3' terminus of unstable tRNAs. While stable tRNAs receive only 3'-terminal CCA, unstable tRNAs are marked with CCACCA and rapidly degraded. The chain is Multifunctional CCA protein from Laribacter hongkongensis (strain HLHK9).